The chain runs to 284 residues: Succinate dehydrogenase [ubiquinone] iron-sulfur subunit, mitochondrial (284 aa).

Residues 1–26 constitute a mitochondrion transit peptide; it reads MAAVVFSLRRSGPVFRLPGVLQVCRG. The 2Fe-2S ferredoxin-type domain maps to 44-137; sequence KKFAIYRWDP…VSKIYPLPHM (94 aa). [2Fe-2S] cluster is bound by residues Cys-97, Cys-102, Cys-105, and Cys-117. The 4Fe-4S ferredoxin-type domain maps to 180 to 210; the sequence is DRDKLDGLYECILCACCSTSCPSYWWNADKY. [4Fe-4S] cluster contacts are provided by Cys-190, Cys-193, and Cys-196. Cys-200 is a binding site for [3Fe-4S] cluster. Trp-205 contributes to the a ubiquinone binding site. [3Fe-4S] cluster is bound by residues Cys-247 and Cys-253. Position 257 (Cys-257) interacts with [4Fe-4S] cluster.

Belongs to the succinate dehydrogenase/fumarate reductase iron-sulfur protein family. As to quaternary structure, component of complex II composed of four subunits: the flavoprotein (FP) sdha, iron-sulfur protein (IP) sdhb, and a cytochrome b composed of sdhc and sdhd. [2Fe-2S] cluster is required as a cofactor. It depends on [3Fe-4S] cluster as a cofactor. The cofactor is [4Fe-4S] cluster.

The protein localises to the mitochondrion inner membrane. The enzyme catalyses a quinone + succinate = fumarate + a quinol. It catalyses the reaction (R)-malate + a quinone = enol-oxaloacetate + a quinol. It carries out the reaction (S)-malate + a quinone = enol-oxaloacetate + a quinol. It participates in carbohydrate metabolism; tricarboxylic acid cycle; fumarate from succinate (eukaryal route): step 1/1. Its activity is regulated as follows. Enol-oxaloacetate inhibits the succinate dehydrogenase activity. Iron-sulfur protein (IP) subunit of the succinate dehydrogenase complex (mitochondrial respiratory chain complex II), responsible for transferring electrons from succinate to ubiquinone (coenzyme Q). SDH also oxidizes malate to the non-canonical enol form of oxaloacetate, enol-oxaloacetate. Enol-oxaloacetate, which is a potent inhibitor of the succinate dehydrogenase activity, is further isomerized into keto-oxaloacetate. In Xenopus tropicalis (Western clawed frog), this protein is Succinate dehydrogenase [ubiquinone] iron-sulfur subunit, mitochondrial (sdhb).